The chain runs to 130 residues: Small ribosomal subunit protein uS9 (130 aa).

This sequence belongs to the universal ribosomal protein uS9 family.

The chain is Small ribosomal subunit protein uS9 from Yersinia enterocolitica serotype O:8 / biotype 1B (strain NCTC 13174 / 8081).